Reading from the N-terminus, the 141-residue chain is Nucleoside triphosphatase NudI (141 aa).

Residues 1–141 (MRQRTIVCPL…RHTLALKGLL (141 aa)) enclose the Nudix hydrolase domain. Residues 38–59 (GGVEPGERIEEALRREIREELG) carry the Nudix box motif.

The protein belongs to the Nudix hydrolase family. NudI subfamily. Monomer. Requires Mg(2+) as cofactor.

It catalyses the reaction a ribonucleoside 5'-triphosphate + H2O = a ribonucleoside 5'-phosphate + diphosphate + H(+). The enzyme catalyses a 2'-deoxyribonucleoside 5'-triphosphate + H2O = a 2'-deoxyribonucleoside 5'-phosphate + diphosphate + H(+). The catalysed reaction is dUTP + H2O = dUMP + diphosphate + H(+). It carries out the reaction dTTP + H2O = dTMP + diphosphate + H(+). It catalyses the reaction dCTP + H2O = dCMP + diphosphate + H(+). In terms of biological role, catalyzes the hydrolysis of nucleoside triphosphates, with a preference for pyrimidine deoxynucleoside triphosphates (dUTP, dTTP and dCTP). This is Nucleoside triphosphatase NudI from Salmonella paratyphi B (strain ATCC BAA-1250 / SPB7).